Here is a 415-residue protein sequence, read N- to C-terminus: Probable peptidoglycan glycosyltransferase FtsW (415 aa).

The next 11 helical transmembrane spans lie at Pro31–Ala51, Phe63–Leu83, Leu97–His117, Ile133–Thr153, Ile162–Gln182, Phe185–Gln205, Trp206–Ser226, Phe245–Gly265, Phe285–Leu305, Ile326–Asn346, and Leu361–Leu381.

Belongs to the SEDS family. FtsW subfamily.

The protein resides in the cell inner membrane. It carries out the reaction [GlcNAc-(1-&gt;4)-Mur2Ac(oyl-L-Ala-gamma-D-Glu-L-Lys-D-Ala-D-Ala)](n)-di-trans,octa-cis-undecaprenyl diphosphate + beta-D-GlcNAc-(1-&gt;4)-Mur2Ac(oyl-L-Ala-gamma-D-Glu-L-Lys-D-Ala-D-Ala)-di-trans,octa-cis-undecaprenyl diphosphate = [GlcNAc-(1-&gt;4)-Mur2Ac(oyl-L-Ala-gamma-D-Glu-L-Lys-D-Ala-D-Ala)](n+1)-di-trans,octa-cis-undecaprenyl diphosphate + di-trans,octa-cis-undecaprenyl diphosphate + H(+). Its pathway is cell wall biogenesis; peptidoglycan biosynthesis. Functionally, peptidoglycan polymerase that is essential for cell division. The sequence is that of Probable peptidoglycan glycosyltransferase FtsW from Halothiobacillus neapolitanus (strain ATCC 23641 / c2) (Thiobacillus neapolitanus).